A 379-amino-acid chain; its full sequence is Cobalt-precorrin-5B C(1)-methyltransferase (379 aa).

This sequence belongs to the CbiD family.

It catalyses the reaction Co-precorrin-5B + S-adenosyl-L-methionine = Co-precorrin-6A + S-adenosyl-L-homocysteine. It participates in cofactor biosynthesis; adenosylcobalamin biosynthesis; cob(II)yrinate a,c-diamide from sirohydrochlorin (anaerobic route): step 6/10. In terms of biological role, catalyzes the methylation of C-1 in cobalt-precorrin-5B to form cobalt-precorrin-6A. The sequence is that of Cobalt-precorrin-5B C(1)-methyltransferase from Salmonella schwarzengrund (strain CVM19633).